The following is a 175-amino-acid chain: Transcriptional repressor NrdR (175 aa).

A zinc finger lies at 3-32; sequence CPYCSHPDSKVIDSRDVDDGVRRRRECVVC. An ATP-cone domain is found at 47–137; that stretch reads LFVVKKDQRR…VYREFTDITQ (91 aa).

The protein belongs to the NrdR family. Requires Zn(2+) as cofactor.

Functionally, negatively regulates transcription of bacterial ribonucleotide reductase nrd genes and operons by binding to NrdR-boxes. In Dehalococcoides mccartyi (strain ATCC BAA-2100 / JCM 16839 / KCTC 5957 / BAV1), this protein is Transcriptional repressor NrdR.